We begin with the raw amino-acid sequence, 35 residues long: Photosystem II reaction center protein T (35 aa).

The chain crosses the membrane as a helical span at residues 3–23 (ALVYTFLLVGTLGIIFFAIFF).

This sequence belongs to the PsbT family. In terms of assembly, PSII is composed of 1 copy each of membrane proteins PsbA, PsbB, PsbC, PsbD, PsbE, PsbF, PsbH, PsbI, PsbJ, PsbK, PsbL, PsbM, PsbT, PsbY, PsbZ, Psb30/Ycf12, at least 3 peripheral proteins of the oxygen-evolving complex and a large number of cofactors. It forms dimeric complexes.

It localises to the plastid. The protein resides in the chloroplast thylakoid membrane. Found at the monomer-monomer interface of the photosystem II (PS II) dimer, plays a role in assembly and dimerization of PSII. PSII is a light-driven water plastoquinone oxidoreductase, using light energy to abstract electrons from H(2)O, generating a proton gradient subsequently used for ATP formation. The chain is Photosystem II reaction center protein T from Zygnema circumcarinatum (Green alga).